The chain runs to 117 residues: uncharacterized protein (117 aa).

A helical membrane pass occupies residues 10-32; the sequence is VCYLGDIAASGFLNSIATALIAV.

The protein localises to the membrane. This is an uncharacterized protein from Rickettsia conorii (strain ATCC VR-613 / Malish 7).